The primary structure comprises 51 residues: Large ribosomal subunit protein eL39 (51 aa).

This sequence belongs to the eukaryotic ribosomal protein eL39 family. Interacts with YIH1.

This chain is Large ribosomal subunit protein eL39 (RPL39), found in Kluyveromyces lactis (strain ATCC 8585 / CBS 2359 / DSM 70799 / NBRC 1267 / NRRL Y-1140 / WM37) (Yeast).